A 344-amino-acid chain; its full sequence is uncharacterized protein (344 aa).

Over M1–Y98 the chain is Cytoplasmic. A helical transmembrane segment spans residues I99 to L119. H120 is a topological domain (lumenal). The chain crosses the membrane as a helical span at residues F121–L141. Topologically, residues N142–K198 are cytoplasmic. A helical membrane pass occupies residues Y199–L219. At Y220–D222 the chain is on the lumenal side. A helical transmembrane segment spans residues V223–V243. Residues Y244 to N273 lie on the Cytoplasmic side of the membrane. A helical membrane pass occupies residues A274 to G294. Topologically, residues N295–I344 are lumenal.

The protein belongs to the UPF0742 family.

Its subcellular location is the endoplasmic reticulum. The protein resides in the membrane. This is an uncharacterized protein from Schizosaccharomyces pombe (strain 972 / ATCC 24843) (Fission yeast).